A 487-amino-acid polypeptide reads, in one-letter code: GTPase Der (487 aa).

2 EngA-type G domains span residues 3–166 (PVIA…IAEL) and 201–374 (VKLA…ESAT). Residues 9–16 (GRPNVGKS), 56–60 (DTGGI), 118–121 (NKTD), 207–214 (GRPNVGKS), 254–258 (DTAGV), and 319–322 (NKWD) contribute to the GTP site. The KH-like domain occupies 375 to 459 (KRISTAMLRR…PIKIEFREGD (85 aa)).

This sequence belongs to the TRAFAC class TrmE-Era-EngA-EngB-Septin-like GTPase superfamily. EngA (Der) GTPase family. As to quaternary structure, associates with the 50S ribosomal subunit.

GTPase that plays an essential role in the late steps of ribosome biogenesis. The polypeptide is GTPase Der (Pseudoalteromonas translucida (strain TAC 125)).